The following is a 198-amino-acid chain: V-type proton ATPase subunit E (198 aa).

The protein belongs to the V-ATPase E subunit family.

Functionally, produces ATP from ADP in the presence of a proton gradient across the membrane. This chain is V-type proton ATPase subunit E, found in Borrelia hermsii (strain HS1 / DAH).